Here is a 330-residue protein sequence, read N- to C-terminus: Putative aminohydrolase AF_1775 (330 aa).

The Zn(2+) site is built by histidine 54, histidine 56, histidine 181, and aspartate 253.

The protein belongs to the metallo-dependent hydrolases superfamily. ATZ/TRZ family.

The polypeptide is Putative aminohydrolase AF_1775 (Archaeoglobus fulgidus (strain ATCC 49558 / DSM 4304 / JCM 9628 / NBRC 100126 / VC-16)).